The primary structure comprises 926 residues: Mating-type protein A-alpha Y3 (926 aa).

The segment at residues 147–206 is a DNA-binding region (homeobox); it reads YKKPRPKFHSEYTPLLELYFHFNAYPTFADRRMLAEKTGMQTRQITVWFQNHRRRAKGPL. Disordered stretches follow at residues 238 to 281, 308 to 374, 424 to 452, and 625 to 734; these read SHLR…KVGK, QQAP…TSSA, GKGK…SRLN, and RARK…MNES. 2 stretches are compositionally biased toward basic and acidic residues: residues 267-281 and 326-338; these read KKPD…KVGK and NAQD…ATKS. Residues 428–441 show a composition bias toward polar residues; that stretch reads PSQNLTSTPATFST. Residues 632–660 show a composition bias toward basic and acidic residues; sequence KQAEKEARKEEKRARKEAKQAKKDRKEQR. Composition is skewed to low complexity over residues 669–687 and 699–724; these read STLD…SATS and SSAS…SGTS.

The protein localises to the nucleus. Functionally, specifies A-alpha-3 mating-type. May regulate the expression of genes specific to the homokaryotic cell type. This Schizophyllum commune (Split gill fungus) protein is Mating-type protein A-alpha Y3.